The sequence spans 414 residues: Esterase FrsA (414 aa).

The protein belongs to the FrsA family.

It carries out the reaction a carboxylic ester + H2O = an alcohol + a carboxylate + H(+). Functionally, catalyzes the hydrolysis of esters. This Shigella boydii serotype 18 (strain CDC 3083-94 / BS512) protein is Esterase FrsA.